Reading from the N-terminus, the 244-residue chain is MSAAAYMDFVAAQCLVSISNRAAVPEHGGAPEAERLRLPEREVTKEHGDPGDTWKDYCTLVTIAKSLLDLNKYRPIQTPSVCSDSLESPDEDIGSDSDVTTESGSSPSHSPEERQDSGSAPSPLSLLHSGVASKGKHASEKRHKCPYSGCGKVYGKSSHLKAHYRVHTGERPFPCTWPDCLKKFSRSDELTRHYRTHTGEKQFRCPLCEKRFMRSDHLTKHARRHTVFHPSMIKRSKKALACPL.

Disordered stretches follow at residues 26 to 51 and 79 to 143; these read EHGGAPEAERLRLPEREVTKEHGDPG and PSVC…EKRH. Residues 32-51 are compositionally biased toward basic and acidic residues; that stretch reads EAERLRLPEREVTKEHGDPG. Ser122 carries the post-translational modification Phosphoserine. Over residues 134–143 the composition is skewed to basic residues; sequence KGKHASEKRH. C2H2-type zinc fingers lie at residues 143 to 167, 173 to 197, and 203 to 225; these read HKCPYSGCGKVYGKSSHLKAHYRVH, FPCTWPDCLKKFSRSDELTRHYRTH, and FRCPLCEKRFMRSDHLTKHARRH.

It belongs to the Sp1 C2H2-type zinc-finger protein family. In terms of assembly, interacts with ZZEF1.

It localises to the nucleus. Transcription factor that binds to GC box promoter elements. Selectively activates mRNA synthesis from genes containing tandem repeats of GC boxes but represses genes with a single GC box. Acts as an epidermal circadian transcription factor regulating keratinocyte proliferation. The polypeptide is Krueppel-like factor 9 (Klf9) (Mus musculus (Mouse)).